Reading from the N-terminus, the 113-residue chain is Large ribosomal subunit protein uL22 (113 aa).

The protein belongs to the universal ribosomal protein uL22 family. In terms of assembly, part of the 50S ribosomal subunit.

This protein binds specifically to 23S rRNA; its binding is stimulated by other ribosomal proteins, e.g. L4, L17, and L20. It is important during the early stages of 50S assembly. It makes multiple contacts with different domains of the 23S rRNA in the assembled 50S subunit and ribosome. In terms of biological role, the globular domain of the protein is located near the polypeptide exit tunnel on the outside of the subunit, while an extended beta-hairpin is found that lines the wall of the exit tunnel in the center of the 70S ribosome. The polypeptide is Large ribosomal subunit protein uL22 (Thermus thermophilus (strain ATCC BAA-163 / DSM 7039 / HB27)).